The primary structure comprises 325 residues: Sensor histidine kinase YxdK (325 aa).

The Cytoplasmic portion of the chain corresponds to 1–8; sequence MKLFLRSH. A helical transmembrane segment spans residues 9-29; it reads AVLILLFLLQGLFVFFYYWFA. Over 30-33 the chain is Extracellular; it reads GLHS. The helical transmembrane segment at 34 to 54 threads the bilayer; it reads FSHLFYILGVQLLILAGYLAY. Over 55-325 the chain is Cytoplasmic; the sequence is RWYKDRGVYH…SVRFSFLTKM (271 aa). The 208-residue stretch at 118–325 folds into the Histidine kinase domain; the sequence is QWVHQVKTPL…SVRFSFLTKM (208 aa). His-121 carries the post-translational modification Phosphohistidine; by autocatalysis.

Its subcellular location is the cell membrane. The catalysed reaction is ATP + protein L-histidine = ADP + protein N-phospho-L-histidine.. Its function is as follows. Probable member of the two-component regulatory system YxdK/YxdJ. May activate YxdJ in response to the antibacterial protein LL-37. The chain is Sensor histidine kinase YxdK (yxdK) from Bacillus subtilis (strain 168).